A 506-amino-acid polypeptide reads, in one-letter code: Maturase K (506 aa).

It belongs to the intron maturase 2 family. MatK subfamily.

It is found in the plastid. Its subcellular location is the chloroplast. Its function is as follows. Usually encoded in the trnK tRNA gene intron. Probably assists in splicing its own and other chloroplast group II introns. This chain is Maturase K, found in Trifolium subterraneum (Subterranean clover).